Consider the following 208-residue polypeptide: Small ribosomal subunit protein uS4 (208 aa).

Residues 99–165 form the S4 RNA-binding domain; the sequence is RRLDNVVFQL…PRLKEILSSL (67 aa).

The protein belongs to the universal ribosomal protein uS4 family. As to quaternary structure, part of the 30S ribosomal subunit. Contacts protein S5. The interaction surface between S4 and S5 is involved in control of translational fidelity.

In terms of biological role, one of the primary rRNA binding proteins, it binds directly to 16S rRNA where it nucleates assembly of the body of the 30S subunit. With S5 and S12 plays an important role in translational accuracy. The polypeptide is Small ribosomal subunit protein uS4 (Desulfitobacterium hafniense (strain Y51)).